We begin with the raw amino-acid sequence, 498 residues long: ATP synthase subunit beta, chloroplastic (498 aa).

Residue 172 to 179 (GGAGVGKT) participates in ATP binding.

Belongs to the ATPase alpha/beta chains family. As to quaternary structure, F-type ATPases have 2 components, CF(1) - the catalytic core - and CF(0) - the membrane proton channel. CF(1) has five subunits: alpha(3), beta(3), gamma(1), delta(1), epsilon(1). CF(0) has four main subunits: a(1), b(1), b'(1) and c(9-12).

The protein resides in the plastid. Its subcellular location is the chloroplast thylakoid membrane. It catalyses the reaction ATP + H2O + 4 H(+)(in) = ADP + phosphate + 5 H(+)(out). Produces ATP from ADP in the presence of a proton gradient across the membrane. The catalytic sites are hosted primarily by the beta subunits. The polypeptide is ATP synthase subunit beta, chloroplastic (Populus trichocarpa (Western balsam poplar)).